We begin with the raw amino-acid sequence, 431 residues long: Gamma-glutamyl phosphate reductase (431 aa).

It belongs to the gamma-glutamyl phosphate reductase family.

Its subcellular location is the cytoplasm. It catalyses the reaction L-glutamate 5-semialdehyde + phosphate + NADP(+) = L-glutamyl 5-phosphate + NADPH + H(+). It functions in the pathway amino-acid biosynthesis; L-proline biosynthesis; L-glutamate 5-semialdehyde from L-glutamate: step 2/2. Catalyzes the NADPH-dependent reduction of L-glutamate 5-phosphate into L-glutamate 5-semialdehyde and phosphate. The product spontaneously undergoes cyclization to form 1-pyrroline-5-carboxylate. The sequence is that of Gamma-glutamyl phosphate reductase from Acaryochloris marina (strain MBIC 11017).